A 110-amino-acid polypeptide reads, in one-letter code: UPF0122 protein BPUM_1495 (110 aa).

The protein belongs to the UPF0122 family.

Functionally, might take part in the signal recognition particle (SRP) pathway. This is inferred from the conservation of its genetic proximity to ftsY/ffh. May be a regulatory protein. The chain is UPF0122 protein BPUM_1495 from Bacillus pumilus (strain SAFR-032).